Consider the following 221-residue polypeptide: MRSQLSLIGKKEGMMHVFDKNGNLVACSVISVDANVVAQLKTASSDGYNAVQMGADVVQAPEKTIEKRFSKALLGHFKKSGGRVCRVLKEVVVSEEAVQSVSLGDEFGLEIFDGVSNVDICGISKGKGFQGVMKKFGFRGGPKSHGSGFHRHAGSTGMRSTPGRCFPGSKRPSHMGCDRVTVKNLEVVKVDLDRKVMLVKGAIPGFKGSVVVVKRSCGVEG.

The protein belongs to the universal ribosomal protein uL3 family. As to quaternary structure, part of the 50S ribosomal subunit. Forms a cluster with proteins L14 and L19.

Functionally, one of the primary rRNA binding proteins, it binds directly near the 3'-end of the 23S rRNA, where it nucleates assembly of the 50S subunit. This chain is Large ribosomal subunit protein uL3, found in Chlamydia trachomatis serovar A (strain ATCC VR-571B / DSM 19440 / HAR-13).